We begin with the raw amino-acid sequence, 372 residues long: Chaperone protein DnaJ (372 aa).

In terms of domain architecture, J spans 5–70 (DYYEVLGVAK…DKRAAYDQFG (66 aa)). The CR-type zinc-finger motif lies at 133–211 (GTETKIRIPT…CHGEGRVKKH (79 aa)). Cysteine 146, cysteine 149, cysteine 163, cysteine 166, cysteine 185, cysteine 188, cysteine 199, and cysteine 202 together coordinate Zn(2+). CXXCXGXG motif repeat units follow at residues 146 to 153 (CGTCHGSG), 163 to 170 (CSACGGHG), 185 to 192 (CPRCGGTG), and 199 to 206 (CPSCHGEG).

The protein belongs to the DnaJ family. As to quaternary structure, homodimer. Zn(2+) is required as a cofactor.

The protein localises to the cytoplasm. Functionally, participates actively in the response to hyperosmotic and heat shock by preventing the aggregation of stress-denatured proteins and by disaggregating proteins, also in an autonomous, DnaK-independent fashion. Unfolded proteins bind initially to DnaJ; upon interaction with the DnaJ-bound protein, DnaK hydrolyzes its bound ATP, resulting in the formation of a stable complex. GrpE releases ADP from DnaK; ATP binding to DnaK triggers the release of the substrate protein, thus completing the reaction cycle. Several rounds of ATP-dependent interactions between DnaJ, DnaK and GrpE are required for fully efficient folding. Also involved, together with DnaK and GrpE, in the DNA replication of plasmids through activation of initiation proteins. The polypeptide is Chaperone protein DnaJ (Thiobacillus denitrificans (strain ATCC 25259 / T1)).